The following is a 72-amino-acid chain: Large ribosomal subunit protein bL31c (72 aa).

Belongs to the bacterial ribosomal protein bL31 family. Type A subfamily. In terms of assembly, part of the 50S ribosomal subunit.

The protein resides in the plastid. Its subcellular location is the chloroplast. In terms of biological role, binds the 23S rRNA. The polypeptide is Large ribosomal subunit protein bL31c (rpl31) (Phaeodactylum tricornutum (strain CCAP 1055/1)).